The chain runs to 1002 residues: Solute carrier family 12 member 3 (1002 aa).

The Cytoplasmic portion of the chain corresponds to 1 to 135 (MAELPVTELP…KSPGEPVRFG (135 aa)). A Phosphoserine modification is found at Ser41. Position 44 is a phosphothreonine (Thr44). Ser47 is subject to Phosphoserine. Phosphothreonine occurs at positions 48, 53, and 58. Ser71 and Ser89 each carry phosphoserine. Residue Thr122 is modified to Phosphothreonine. Ser124 carries the post-translational modification Phosphoserine. A discontinuously helical transmembrane segment spans residues 136 to 165 (WVKGVMIRCMLNIWGVILYLRLPWITAQAG). Na(+)-binding residues include Leu146 and Trp149. A helical transmembrane segment spans residues 166–187 (IVLTWLIILLSVMVTSITGLSI). At 188–218 (SAISTNGKVKSGGTYFLISRSLGPELGGSIG) the chain is on the cytoplasmic side. A helical membrane pass occupies residues 219–241 (LIFAFANAVGVAMHTVGFAETVR). Over 242-253 (DLLQEYGTPIVD) the chain is Extracellular. The next 2 membrane-spanning stretches (helical) occupy residues 254–278 (PIND…AGME) and 279–301 (WESK…YLVG). Residues 302-336 (TLIPASEDKASKGFYSYHGDIFVQNLVPDWRGIDG) lie on the Extracellular side of the membrane. The chain crosses the membrane as a discontinuously helical span at residues 337 to 358 (SFFGMFSIFFPSATGILAGANI). Chloride is bound by residues Gly351, Ile352, and Leu353. Over 359-369 (SGDLKDPAVAI) the chain is Cytoplasmic. Residues 370-391 (PKGTLMAIFWTTISYLAISATI) traverse the membrane as a helical segment. Over 392–451 (GSCVVRDASGDVNDTMTPGPGPCEGLACGYGWNFTECSQQRSCRYGLINYYQTMSMVSAF) the chain is Extracellular. An N-linked (GlcNAc...) asparagine glycan is attached at Asn404. An intrachain disulfide couples Cys414 to Cys419. Asn424 carries an N-linked (GlcNAc...) asparagine glycan. Cys428 and Cys434 are oxidised to a cystine. The helical transmembrane segment at 452–475 (APLITAGIFGATLSSALACLVSAA) threads the bilayer. 3 residues coordinate Na(+): Ala462, Ser465, and Ser466. The Cytoplasmic segment spans residues 476-505 (KVFQCLCEDQLYPLIGFFGKGYGKNREPVR). The helical transmembrane segment at 506–520 (GYLLAYAIAVAFIII) threads the bilayer. The Extracellular portion of the chain corresponds to 521–525 (AELNT). The chain crosses the membrane as a helical span at residues 526–542 (IAPIISNFFLCSYALIN). A chloride-binding site is contributed by Tyr538. Residues 543–565 (FSCFHASITNSPGWRPSFRYYSK) are Cytoplasmic-facing. 2 helical membrane-spanning segments follow: residues 566–585 (WAAL…LTWW) and 586–597 (AALIAIGVVLFL). Residues 598–1002 (LLYVIYKKPE…QENVLTFYCQ (405 aa)) lie on the Cytoplasmic side of the membrane. Residues 613–628 (SVQAGSYNLALSYSVG) are scissor helix. ATP contacts are provided by Leu646, Arg653, Val675, Gly739, Leu778, and Asn779.

This sequence belongs to the SLC12A transporter family. As to quaternary structure, homodimer; adopts a domain-swap conformation at the scissor helices connecting the transmembrane domain and C-terminal domain. Interacts with KLHL3. Interacts with IL18R1; this interaction is increased by IL18 treatment. Ubiquitinated; ubiquitination is essential for regulation of endocytosis. Post-translationally, phosphorylated at Thr-53, Thr-58 and Ser-71 by OXSR1/OSR1 and STK39/SPAK downstream of WNK4, promoting its activity. Phosphorylated in response to IL18. As to expression, expressed predominantly in kidney, including in distal tubules (at protein level). Detected at low levels in heart, lung and liver. Not detected in normal aorta, but abundantly expressed in fatty streaks and advanced atherosclerotic lesions. In atherosclerotic lesions, expressed in macrophages, smooth muscle cells and endothelial cells (at protein level).

Its subcellular location is the cell membrane. The protein localises to the apical cell membrane. The enzyme catalyses chloride(out) + Na(+)(out) = chloride(in) + Na(+)(in). Its activity is regulated as follows. Phosphorylation by OXSR1/OSR1 and STK39/SPAK in kidney distal convoluted tubules promotes its activity. Also activated by OXSR1/OSR1 and STK39/SPAK downstream of WNK3. Inhibited by thiazide-type diuretic metolazone. Thiazide drugs, such as polythiazide, specifically inhibit SLC12A3/NCC transporter activity by competing with chloride for binding. Functionally, electroneutral sodium and chloride ion cotransporter, which acts as a key mediator of sodium and chloride reabsorption in kidney distal convoluted tubules. Also acts as a receptor for the pro-inflammatory cytokine IL18, thereby contributing to IL18-induced cytokine production, including IFNG, IL6, IL18 and CCL2. May act either independently of IL18R1, or in a complex with IL18R1. In Mus musculus (Mouse), this protein is Solute carrier family 12 member 3.